Reading from the N-terminus, the 307-residue chain is Nucleotide-binding protein Sca_0414 (307 aa).

Gly-19 to Ser-26 provides a ligand contact to ATP. Asp-70–Gly-73 is a binding site for GTP.

This sequence belongs to the RapZ-like family.

In terms of biological role, displays ATPase and GTPase activities. The sequence is that of Nucleotide-binding protein Sca_0414 from Staphylococcus carnosus (strain TM300).